The following is a 218-amino-acid chain: Ribonuclease HII (218 aa).

The region spanning 22–211 (VRIAGVDEAG…VRAALESRFS (190 aa)) is the RNase H type-2 domain. A divalent metal cation-binding residues include aspartate 28, glutamate 29, and aspartate 119.

It belongs to the RNase HII family. Mn(2+) serves as cofactor. The cofactor is Mg(2+).

It is found in the cytoplasm. It carries out the reaction Endonucleolytic cleavage to 5'-phosphomonoester.. In terms of biological role, endonuclease that specifically degrades the RNA of RNA-DNA hybrids. This chain is Ribonuclease HII, found in Maricaulis maris (strain MCS10) (Caulobacter maris).